Consider the following 541-residue polypeptide: Beta-glucuronidase (541 aa).

An N-terminal signal peptide occupies residues 1–20 (MHHHPITLLSLLLGAAQSIA). Residues Asn-69, Asn-115, and Asn-157 are each glycosylated (N-linked (GlcNAc...) asparagine). Glu-208 functions as the Proton donor in the catalytic mechanism. Residues Asn-217, Asn-291, and Asn-304 are each glycosylated (N-linked (GlcNAc...) asparagine). The active-site Nucleophile is Glu-324. 5 N-linked (GlcNAc...) asparagine glycosylation sites follow: Asn-380, Asn-426, Asn-441, Asn-483, and Asn-512.

This sequence belongs to the glycosyl hydrolase 79 family. Post-translationally, N-glycosylated.

The protein resides in the secreted. The enzyme catalyses a beta-D-glucuronoside + H2O = D-glucuronate + an alcohol. Functionally, beta-glucuronidase that hydrolyzes beta-glucuronosyl and 4-O-methyl-beta-glucuronosyl residues of arabinogalactan-protein. Hydrolyzed heparan sulfate only very weakly. Has no activity on xylan from birchwood. Able to catalyze the transglycosylation of glucuronic acid (GlcA) residues from p-nitrophenyl-beta-glucuronic acid (PNP beta-GlcA) to various monosaccharide acceptors such as glucose, galactose and xylose. The sequence is that of Beta-glucuronidase from Aspergillus niger (strain ATCC MYA-4892 / CBS 513.88 / FGSC A1513).